A 333-amino-acid chain; its full sequence is Outer membrane protein assembly factor BamC (333 aa).

An N-terminal signal peptide occupies residues 1-18; sequence MKKCLFPLSVLAVIVATG. A lipid anchor (N-palmitoyl cysteine) is attached at Cys19. Cys19 is lipidated: S-diacylglycerol cysteine.

This sequence belongs to the BamC family. Part of the Bam complex.

It localises to the cell outer membrane. Functionally, part of the outer membrane protein assembly complex, which is involved in assembly and insertion of beta-barrel proteins into the outer membrane. The protein is Outer membrane protein assembly factor BamC of Actinobacillus succinogenes (strain ATCC 55618 / DSM 22257 / CCUG 43843 / 130Z).